Consider the following 141-residue polypeptide: Ribonuclease VapC2 (141 aa).

Positions 7-129 constitute a PINc domain; it reads LIDKSALVRL…FDAIAALTGQ (123 aa). D99, D117, and D119 together coordinate Mg(2+).

The protein belongs to the PINc/VapC protein family. As to quaternary structure, probably active as a homodimer. Requires Mg(2+) as cofactor.

In terms of biological role, toxic component of a type II toxin-antitoxin (TA) system. Acts as an RNase. All its toxic effects are neutralized by coexpression with cognate antitoxin VapB2. This is Ribonuclease VapC2 from Mycobacterium tuberculosis (strain CDC 1551 / Oshkosh).